Here is a 126-residue protein sequence, read N- to C-terminus: Fluoride-specific ion channel FluC (126 aa).

A run of 4 helical transmembrane segments spans residues 4-24 (PLLS…LLGL), 33-53 (IPLG…FAMA), 67-87 (FVIT…IEIV), and 97-117 (MAML…CLGL). Glycine 74 and threonine 77 together coordinate Na(+).

Belongs to the fluoride channel Fluc/FEX (TC 1.A.43) family.

It localises to the cell inner membrane. It catalyses the reaction fluoride(in) = fluoride(out). Its activity is regulated as follows. Na(+) is not transported, but it plays an essential structural role and its presence is essential for fluoride channel function. Functionally, fluoride-specific ion channel. Important for reducing fluoride concentration in the cell, thus reducing its toxicity. In Acinetobacter baumannii (strain ACICU), this protein is Fluoride-specific ion channel FluC.